A 74-amino-acid polypeptide reads, in one-letter code: Protein krueppel (74 aa).

C2H2-type zinc fingers lie at residues Glu1–His4, Phe10–His32, Tyr38–His60, and Tyr66–Arg74.

Belongs to the krueppel C2H2-type zinc-finger protein family.

Its subcellular location is the nucleus. Krueppel is a gap class segmentation protein. This Euscelis plebejus (Leafhopper) protein is Protein krueppel (Kr).